A 110-amino-acid chain; its full sequence is Protein ripply3 (110 aa).

The WRPW motif motif lies at 18-21; that stretch reads WRPW. A ripply homology domain region spans residues 50–85; that stretch reads HPVRLFLPRSRMQEYLSRLGSSVLASFPVQATLHFY. Residues 87 to 99 show a composition bias toward acidic residues; it reads DEDSSSEEEEDEE. Positions 87-110 are disordered; it reads DEDSSSEEEEDEEHANTRCRLWRP.

This sequence belongs to the ripply family.

It is found in the nucleus. Its function is as follows. Probable transcriptional regulator involved in developmental processes. This chain is Protein ripply3 (ripply3), found in Danio rerio (Zebrafish).